Reading from the N-terminus, the 308-residue chain is GTPase Era (308 aa).

Residues 7–181 form the Era-type G domain; that stretch reads RCGWVALIGP…LRLIVGYMPE (175 aa). The interval 15–22 is G1; the sequence is GPPNAGKS. Residue 15–22 coordinates GTP; that stretch reads GPPNAGKS. The tract at residues 41–45 is G2; that stretch reads QTTRN. Residues 62 to 65 form a G3 region; it reads DTPG. GTP-binding positions include 62–66 and 130–133; these read DTPGI and NKID. The tract at residues 130-133 is G4; the sequence is NKID. A G5 region spans residues 160–162; it reads ASA. Residues 212-290 enclose the KH type-2 domain; that stretch reads LRQELPYSTA…HLELWVKVRE (79 aa).

The protein belongs to the TRAFAC class TrmE-Era-EngA-EngB-Septin-like GTPase superfamily. Era GTPase family. In terms of assembly, monomer.

The protein localises to the cytoplasm. Its subcellular location is the cell inner membrane. Functionally, an essential GTPase that binds both GDP and GTP, with rapid nucleotide exchange. Plays a role in 16S rRNA processing and 30S ribosomal subunit biogenesis and possibly also in cell cycle regulation and energy metabolism. The sequence is that of GTPase Era from Nitratidesulfovibrio vulgaris (strain DP4) (Desulfovibrio vulgaris).